The following is a 264-amino-acid chain: Diphthine synthase (264 aa).

Residues L10, D87, V90, 115–116, L166, A209, and H234 each bind S-adenosyl-L-methionine; that span reads SI.

This sequence belongs to the diphthine synthase family. As to quaternary structure, homodimer.

The catalysed reaction is 2-[(3S)-amino-3-carboxypropyl]-L-histidyl-[translation elongation factor 2] + 3 S-adenosyl-L-methionine = diphthine-[translation elongation factor 2] + 3 S-adenosyl-L-homocysteine + 3 H(+). Its pathway is protein modification; peptidyl-diphthamide biosynthesis. Functionally, S-adenosyl-L-methionine-dependent methyltransferase that catalyzes the trimethylation of the amino group of the modified target histidine residue in translation elongation factor 2 (EF-2), to form an intermediate called diphthine. The three successive methylation reactions represent the second step of diphthamide biosynthesis. The polypeptide is Diphthine synthase (Thermococcus gammatolerans (strain DSM 15229 / JCM 11827 / EJ3)).